The sequence spans 506 residues: Tabersonine 3-oxygenase (506 aa).

The Lumenal portion of the chain corresponds to 1-5 (MEFHE). A helical transmembrane segment spans residues 6-26 (SSPFVFITRGFIFIAISIAVL). The Cytoplasmic segment spans residues 27–506 (RRIISKKTKT…DLQLIATSYA (480 aa)). C450 provides a ligand contact to heme.

Belongs to the cytochrome P450 family. Heme serves as cofactor. As to expression, expressed in leaf epidermis.

It is found in the endoplasmic reticulum membrane. It catalyses the reaction 16-methoxytabersonine + reduced [NADPH--hemoprotein reductase] + O2 = (3R)-1,2-didehydro-3-hydroxy-16-methoxy-2,3-dihydrotabersonine + oxidized [NADPH--hemoprotein reductase] + H2O + H(+). It carries out the reaction (-)-tabersonine + reduced [NADPH--hemoprotein reductase] + O2 = (3R)-1,2-didehydro-3-hydroxy-2,3-dihydrotabersonine + oxidized [NADPH--hemoprotein reductase] + H2O + H(+). It participates in alkaloid biosynthesis; vindoline biosynthesis. Its function is as follows. Cytochrome P450 catalyzing the monooxygenation of 16-methoxytabersonine, 16-hydroxytabersonine and tabersonine, but not of 2,3-dihydrotabersonine. Converts the C2,C3 alkene of tabersonine and 16-methoxytabersonine to the epoxides, which then spontaneously open to form the corresponding imine alcohols. Inactive in converting amyrin to ursolic acid. The sequence is that of Tabersonine 3-oxygenase from Catharanthus roseus (Madagascar periwinkle).